Reading from the N-terminus, the 295-residue chain is Acetylglutamate kinase (295 aa).

Residues 66 to 67, arginine 88, and asparagine 193 contribute to the substrate site; that span reads GG.

It belongs to the acetylglutamate kinase family. ArgB subfamily.

Its subcellular location is the cytoplasm. The enzyme catalyses N-acetyl-L-glutamate + ATP = N-acetyl-L-glutamyl 5-phosphate + ADP. The protein operates within amino-acid biosynthesis; L-arginine biosynthesis; N(2)-acetyl-L-ornithine from L-glutamate: step 2/4. Its function is as follows. Catalyzes the ATP-dependent phosphorylation of N-acetyl-L-glutamate. In Sinorhizobium medicae (strain WSM419) (Ensifer medicae), this protein is Acetylglutamate kinase.